We begin with the raw amino-acid sequence, 346 residues long: MVGGGGKRRTAGAGPQCEKTVEVKKSKFSEADVSSDLRKEVENLYKLSLPEDFYHFWKFCEELDPEKPADALATSLGLRLVGPYDILAGKHKMKKKPTGLNCNLHWRFYYDPPEFQTIIIGDNKTQYHMGYFRDSPDELPVYVGTNEAKKNCIIIQNGDNVFAAIKLFLMKKLKEVTDRKKISILKNIDEKLTEAARKLGYSLEQRTVKMRQRDKKVVTKTFHGAGLVVPVDKNDVGYRELPETDADLKRICKAVVDAASDEERLKAFAPIQEMMTFVQFANDECDYGMGLELGMDLFCYGSHYFHKVAGQLLPLAYNLLKRDLFAKIIEDHLASRSEENIDQLAG.

The residue at position 1 (Met-1) is an N-acetylmethionine. Lys-19, Lys-186, and Lys-233 each carry N6-acetyllysine. PolyADP-ribosyl aspartic acid is present on Asp-235. Position 238 is an ADP-ribosyltyrosine (Tyr-238). Glu-240 bears the PolyADP-ribosyl glutamic acid mark. An interaction with PARP1 region spans residues 242-346 (PETDADLKRI…SEENIDQLAG (105 aa)). Glu-284 acts as the Proton donor in catalysis.

Belongs to the HPF1 family. Interacts with PARP1 (via the PARP catalytic domain). Interacts with PARP2 (via the PARP catalytic domain). Interacts with core nucleosomes in a PARP1- and PARP2-dependent manner.

It localises to the chromosome. The protein localises to the nucleus. In terms of biological role, cofactor for serine ADP-ribosylation that confers serine specificity on PARP1 and PARP2 and plays a key role in DNA damage response. Initiates the repair of double-strand DNA breaks: recruited to DNA damage sites by PARP1 and PARP2 and switches the amino acid specificity of PARP1 and PARP2 from aspartate or glutamate to serine residues, licensing serine ADP-ribosylation of target proteins. Serine ADP-ribosylation of target proteins, such as histones, promotes decompaction of chromatin and the recruitment of repair factors leading to the reparation of DNA strand breaks. Serine ADP-ribosylation of proteins constitutes the primary form of ADP-ribosylation of proteins in response to DNA damage. HPF1 acts by completing the active site of PARP1 and PARP2: forms a composite active site composed of residues from HPF1 and PARP1 or PARP2. While HPF1 promotes the initiation of serine ADP-ribosylation, it restricts the polymerase activity of PARP1 and PARP2 in order to limit the length of poly-ADP-ribose chains. HPF1 also promotes tyrosine ADP-ribosylation, probably by conferring tyrosine specificity on PARP1. The protein is Histone PARylation factor 1 of Mus musculus (Mouse).